A 219-amino-acid polypeptide reads, in one-letter code: Proteasome subunit beta (219 aa).

The propeptide at 1-14 (MISGSEYHKEYMKG) is removed in mature form; by autocatalysis. Threonine 15 functions as the Nucleophile in the catalytic mechanism.

Belongs to the peptidase T1B family. In terms of assembly, the 20S proteasome core is composed of 14 alpha and 14 beta subunits that assemble into four stacked heptameric rings, resulting in a barrel-shaped structure. The two inner rings, each composed of seven catalytic beta subunits, are sandwiched by two outer rings, each composed of seven alpha subunits. The catalytic chamber with the active sites is on the inside of the barrel. Has a gated structure, the ends of the cylinder being occluded by the N-termini of the alpha-subunits. Is capped at one or both ends by the proteasome regulatory ATPase, PAN.

It is found in the cytoplasm. The enzyme catalyses Cleavage of peptide bonds with very broad specificity.. The formation of the proteasomal ATPase PAN-20S proteasome complex, via the docking of the C-termini of PAN into the intersubunit pockets in the alpha-rings, triggers opening of the gate for substrate entry. Interconversion between the open-gate and close-gate conformations leads to a dynamic regulation of the 20S proteasome proteolysis activity. In terms of biological role, component of the proteasome core, a large protease complex with broad specificity involved in protein degradation. This chain is Proteasome subunit beta, found in Methanococcus vannielii (strain ATCC 35089 / DSM 1224 / JCM 13029 / OCM 148 / SB).